Here is a 214-residue protein sequence, read N- to C-terminus: Phosphoheptose isomerase (214 aa).

Residues Ile51–Tyr209 enclose the SIS domain. A substrate-binding site is contributed by Asn66 to Gly68. Residues His75 and Glu79 each contribute to the Zn(2+) site. Residues Glu79, Asn110–Asp111, Ser136–Ser138, Ser141, and Gln189 each bind substrate. Gln189 and His197 together coordinate Zn(2+).

The protein belongs to the SIS family. GmhA subfamily. Zn(2+) serves as cofactor.

Its subcellular location is the cytoplasm. It catalyses the reaction 2 D-sedoheptulose 7-phosphate = D-glycero-alpha-D-manno-heptose 7-phosphate + D-glycero-beta-D-manno-heptose 7-phosphate. It functions in the pathway carbohydrate biosynthesis; D-glycero-D-manno-heptose 7-phosphate biosynthesis; D-glycero-alpha-D-manno-heptose 7-phosphate and D-glycero-beta-D-manno-heptose 7-phosphate from sedoheptulose 7-phosphate: step 1/1. In terms of biological role, catalyzes the isomerization of sedoheptulose 7-phosphate in D-glycero-D-manno-heptose 7-phosphate. This is Phosphoheptose isomerase from Chlorobium limicola (strain DSM 245 / NBRC 103803 / 6330).